The primary structure comprises 138 residues: Glia maturation factor (138 aa).

One can recognise an ADF-H domain in the interval 3-138 (DNQICDISNE…TEEWLKAKLK (136 aa)).

This sequence belongs to the actin-binding proteins ADF family. GMF subfamily. In terms of tissue distribution, in ovaries, expressed in follicular epithelium, in polar cells, migrating border cells, and centripedal cells (at protein level).

The protein localises to the cell projection. The protein resides in the lamellipodium. It localises to the cytoplasm. Its subcellular location is the perinuclear region. It is found in the nucleus. The protein localises to the cell cortex. Its function is as follows. Inhibits Arp2/3-mediated actin nucleation. Together with flr, promotes Arp2/3-nucleated actin filament array disassembly. Promotes debranching. Regulates lamellipodial protrusion dynamics possibly by facilitating lamellipodial retraction. In egg chambers, enhances the retraction dynamics of cellular extensions in border cells and thus together with flr plays an important role in directional migration of border cell clusters. This is Glia maturation factor from Drosophila melanogaster (Fruit fly).